The chain runs to 126 residues: Histone H2B type 1-D (126 aa).

Over residues 1–12 (MPEPTKSAPAPK) the composition is skewed to low complexity. The tract at residues 1–36 (MPEPTKSAPAPKKGSKKAVTKAQKKDGKKRKRSRKE) is disordered. At proline 2 the chain carries N-acetylproline. Glutamate 3 carries the post-translational modification ADP-ribosyl glutamic acid. Residue lysine 6 is modified to N6-(2-hydroxyisobutyryl)lysine; alternate. An N6-(beta-hydroxybutyryl)lysine; alternate modification is found at lysine 6. Residue lysine 6 is modified to N6-acetyllysine; alternate. Residue lysine 6 is modified to N6-butyryllysine; alternate. Lysine 6 carries the N6-crotonyllysine; alternate modification. At lysine 6 the chain carries N6-lactoyllysine; alternate. Lysine 6 participates in a covalent cross-link: Glycyl lysine isopeptide (Lys-Gly) (interchain with G-Cter in SUMO2); alternate. An ADP-ribosylserine modification is found at serine 7. Lysine 12 carries the N6-(beta-hydroxybutyryl)lysine; alternate modification. Residues lysine 12 and lysine 13 each carry the N6-acetyllysine; alternate modification. Lysine 12 and lysine 13 each carry N6-crotonyllysine; alternate. An N6-lactoyllysine; alternate modification is found at lysine 12. An N6-(2-hydroxyisobutyryl)lysine; alternate modification is found at lysine 13. Serine 15 is subject to Phosphoserine; by STK4/MST1. An N6-acetyllysine; alternate mark is found at lysine 16, lysine 17, lysine 21, and lysine 24. N6-crotonyllysine; alternate is present on residues lysine 16, lysine 17, lysine 21, and lysine 24. Lysine 16, lysine 17, lysine 21, and lysine 24 each carry N6-lactoyllysine; alternate. Residues lysine 17 and lysine 21 each carry the N6-(beta-hydroxybutyryl)lysine; alternate modification. The residue at position 17 (lysine 17) is an N6-glutaryllysine; alternate. An N6-(2-hydroxyisobutyryl)lysine; alternate mark is found at lysine 21 and lysine 24. Lysine 21 is subject to N6-butyryllysine; alternate. Lysine 21 participates in a covalent cross-link: Glycyl lysine isopeptide (Lys-Gly) (interchain with G-Cter in SUMO2); alternate. Lysine 25 is subject to N6-(2-hydroxyisobutyryl)lysine. Position 35 is an N6-(2-hydroxyisobutyryl)lysine; alternate (lysine 35). Position 35 is an N6-(beta-hydroxybutyryl)lysine; alternate (lysine 35). At lysine 35 the chain carries N6-crotonyllysine; alternate. Position 35 is an N6-glutaryllysine; alternate (lysine 35). At lysine 35 the chain carries N6-succinyllysine; alternate. Lysine 35 participates in a covalent cross-link: Glycyl lysine isopeptide (Lys-Gly) (interchain with G-Cter in ubiquitin); alternate. Glutamate 36 is modified (polyADP-ribosyl glutamic acid). Phosphoserine; by AMPK is present on serine 37. An N6-(2-hydroxyisobutyryl)lysine; alternate mark is found at lysine 44, lysine 47, and lysine 58. The residue at position 44 (lysine 44) is an N6-lactoyllysine; alternate. 2 positions are modified to N6-glutaryllysine; alternate: lysine 44 and lysine 47. Lysine 47 carries the post-translational modification N6-methyllysine; alternate. An N6,N6-dimethyllysine; alternate modification is found at lysine 58. Residue arginine 80 is modified to Dimethylated arginine. Lysine 86 carries the N6-(2-hydroxyisobutyryl)lysine; alternate modification. N6-(beta-hydroxybutyryl)lysine; alternate is present on lysine 86. Lysine 86 bears the N6-acetyllysine; alternate mark. An N6-lactoyllysine; alternate modification is found at lysine 86. Lysine 86 carries the post-translational modification N6,N6,N6-trimethyllysine; alternate. Residues arginine 87 and arginine 93 each carry the omega-N-methylarginine modification. Lysine 109 carries the post-translational modification N6-(2-hydroxyisobutyryl)lysine; alternate. Lysine 109 is subject to N6-lactoyllysine; alternate. Lysine 109 is subject to N6-glutaryllysine; alternate. Position 109 is an N6-methyllysine; alternate (lysine 109). An O-linked (GlcNAc) serine glycan is attached at serine 113. Threonine 116 carries the post-translational modification Phosphothreonine. N6-(2-hydroxyisobutyryl)lysine; alternate is present on residues lysine 117 and lysine 121. N6-(beta-hydroxybutyryl)lysine; alternate is present on residues lysine 117 and lysine 121. An N6-lactoyllysine; alternate mark is found at lysine 117 and lysine 121. 2 positions are modified to N6-glutaryllysine; alternate: lysine 117 and lysine 121. N6-succinyllysine; alternate occurs at positions 117 and 121. The residue at position 117 (lysine 117) is an N6-malonyllysine; alternate. Lysine 117 is modified (N6-methylated lysine; alternate). Lysine 121 is covalently cross-linked (Glycyl lysine isopeptide (Lys-Gly) (interchain with G-Cter in ubiquitin); alternate).

Belongs to the histone H2B family. The nucleosome is a histone octamer containing two molecules each of H2A, H2B, H3 and H4 assembled in one H3-H4 heterotetramer and two H2A-H2B heterodimers. The octamer wraps approximately 147 bp of DNA. Post-translationally, monoubiquitination at Lys-35 (H2BK34Ub) by the MSL1/MSL2 dimer is required for histone H3 'Lys-4' (H3K4me) and 'Lys-79' (H3K79me) methylation and transcription activation at specific gene loci, such as HOXA9 and MEIS1 loci. Similarly, monoubiquitination at Lys-121 (H2BK120Ub) by the RNF20/40 complex gives a specific tag for epigenetic transcriptional activation and is also prerequisite for histone H3 'Lys-4' and 'Lys-79' methylation. It also functions cooperatively with the FACT dimer to stimulate elongation by RNA polymerase II. H2BK120Ub also acts as a regulator of mRNA splicing: deubiquitination by USP49 is required for efficient cotranscriptional splicing of a large set of exons. Phosphorylation at Ser-37 (H2BS36ph) by AMPK in response to stress promotes transcription. Phosphorylated on Ser-15 (H2BS14ph) by STK4/MST1 during apoptosis; which facilitates apoptotic chromatin condensation. Also phosphorylated on Ser-15 in response to DNA double strand breaks (DSBs), and in correlation with somatic hypermutation and immunoglobulin class-switch recombination. In terms of processing, glcNAcylation at Ser-113 promotes monoubiquitination of Lys-121. It fluctuates in response to extracellular glucose, and associates with transcribed genes. Post-translationally, ADP-ribosylated by PARP1 or PARP2 on Ser-7 (H2BS6ADPr) in response to DNA damage. H2BS6ADPr promotes recruitment of CHD1L. Mono-ADP-ribosylated on Glu-3 (H2BE2ADPr) by PARP3 in response to single-strand breaks. Poly ADP-ribosylation on Glu-36 (H2BE35ADPr) by PARP1 regulates adipogenesis: it inhibits phosphorylation at Ser-37 (H2BS36ph), thereby blocking expression of pro-adipogenetic genes. Crotonylation (Kcr) is specifically present in male germ cells and marks testis-specific genes in post-meiotic cells, including X-linked genes that escape sex chromosome inactivation in haploid cells. Crotonylation marks active promoters and enhancers and confers resistance to transcriptional repressors. It is also associated with post-meiotically activated genes on autosomes. In terms of processing, lactylated in macrophages by EP300/P300 by using lactoyl-CoA directly derived from endogenous or exogenous lactate, leading to stimulates gene transcription.

The protein resides in the nucleus. It localises to the chromosome. Functionally, core component of nucleosome. Nucleosomes wrap and compact DNA into chromatin, limiting DNA accessibility to the cellular machineries which require DNA as a template. Histones thereby play a central role in transcription regulation, DNA repair, DNA replication and chromosomal stability. DNA accessibility is regulated via a complex set of post-translational modifications of histones, also called histone code, and nucleosome remodeling. The protein is Histone H2B type 1-D of Homo sapiens (Human).